The following is a 326-amino-acid chain: Dolichyl-phosphate beta-glucosyltransferase (326 aa).

The Lumenal segment spans residues 1-7 (MWTCLCQ). The helical transmembrane segment at 8–28 (LCFYLLSTLAVAALSIAALVL) threads the bilayer. The Cytoplasmic segment spans residues 29–326 (YKTKPYPNIK…RIASIQKKEK (298 aa)).

The protein belongs to the glycosyltransferase 2 family.

The protein localises to the endoplasmic reticulum membrane. It catalyses the reaction a di-trans,poly-cis-dolichyl phosphate + UDP-alpha-D-glucose = a di-trans,poly-cis-dolichyl beta-D-glucosyl phosphate + UDP. It functions in the pathway protein modification; protein glycosylation. Functionally, required for normal production of N-glycosylated proteins in the endoplasmic reticulum (ER). Required for embryonic segmentation, dorsal-ventral patterning and gastrulation. Required for chitin orientation and shaping of the apical and lateral plasma membranes of epidermal cells during cuticle differentiation. Also required for correctly shaping apical membrane topology of the epithelia of other organs such as the midgut and the hindgut. This is Dolichyl-phosphate beta-glucosyltransferase (wol) from Drosophila melanogaster (Fruit fly).